Consider the following 322-residue polypeptide: tRNA uridine(34) hydroxylase (322 aa).

Residues 125–219 (QSPDTVVIDA…YGKDPEVQGK (95 aa)) form the Rhodanese domain. Residue cysteine 179 is the Cysteine persulfide intermediate of the active site.

It belongs to the TrhO family.

The enzyme catalyses uridine(34) in tRNA + AH2 + O2 = 5-hydroxyuridine(34) in tRNA + A + H2O. Catalyzes oxygen-dependent 5-hydroxyuridine (ho5U) modification at position 34 in tRNAs. This Bacillus pumilus (strain SAFR-032) protein is tRNA uridine(34) hydroxylase.